A 327-amino-acid polypeptide reads, in one-letter code: Ornithine carbamoyltransferase 2, anabolic (327 aa).

Carbamoyl phosphate contacts are provided by residues Arg-109 and His-136–Gln-139. L-ornithine-binding positions include Asn-168, Asp-232, and Ser-236–Met-237. Residues Cys-273–Leu-274 and Arg-313 each bind carbamoyl phosphate.

Belongs to the aspartate/ornithine carbamoyltransferase superfamily. OTCase family. As to quaternary structure, homotrimer.

It localises to the cytoplasm. The catalysed reaction is carbamoyl phosphate + L-ornithine = L-citrulline + phosphate + H(+). It functions in the pathway amino-acid biosynthesis; L-arginine biosynthesis; L-arginine from L-ornithine and carbamoyl phosphate: step 1/3. In terms of biological role, plays an important role in the survival and pathogenicity of P.syringae. Phaseolotoxin is a virulence factor that inhibits the catalysis of the host OTCase. Phaseolotoxin-producing bacteria do not suffer autointoxication because they possess the anabolic OTCase ArgK which can function even in the presence of phaseolotoxin. Reversibly catalyzes the transfer of the carbamoyl group from carbamoyl phosphate (CP) to the N(epsilon) atom of ornithine (ORN) to produce L-citrulline, which is a substrate for argininosuccinate synthetase, the enzyme involved in the final step in arginine biosynthesis. The polypeptide is Ornithine carbamoyltransferase 2, anabolic (Pseudomonas savastanoi pv. phaseolicola (Pseudomonas syringae pv. phaseolicola)).